Reading from the N-terminus, the 140-residue chain is FK506-binding protein 2 (140 aa).

The N-terminal stretch at 1–19 (MKFTTGLSVLLFFVLQVFA) is a signal peptide. The region spanning 43-132 (GDVVSVHYTG…IFETELVDIQ (90 aa)) is the PPIase FKBP-type domain.

Belongs to the FKBP-type PPIase family. FKBP2 subfamily.

Its subcellular location is the endoplasmic reticulum. The catalysed reaction is [protein]-peptidylproline (omega=180) = [protein]-peptidylproline (omega=0). Inhibited by both FK506 and rapamycin. PPIases accelerate the folding of proteins. It catalyzes the cis-trans isomerization of proline imidic peptide bonds in oligopeptides. The polypeptide is FK506-binding protein 2 (FPR2) (Kluyveromyces lactis (strain ATCC 8585 / CBS 2359 / DSM 70799 / NBRC 1267 / NRRL Y-1140 / WM37) (Yeast)).